The sequence spans 181 residues: Biofilm-surface layer protein A (181 aa).

An N-terminal signal peptide occupies residues 1–28 (MKRKLLSSLAISALSLGLLVSAPTASFA).

Belongs to the BslA/BslB family. As to quaternary structure, forms polymers.

Its subcellular location is the secreted. The protein resides in the cell wall. In terms of biological role, involved in biofilm formation. Self-polymerizes and forms a layer on the surface of biofilms that confers hydrophobicity to the biofilm. The layer is stable and capable of resistance to high mechanical force compression. Required for complex colony architecture. May function synergistically with exopolysaccharides and TasA amyloid fibers to facilitate the assembly of the biofilm matrix. This is Biofilm-surface layer protein A from Bacillus subtilis (strain 168).